The sequence spans 197 residues: V-type ATP synthase subunit E 2 (197 aa).

Belongs to the V-ATPase E subunit family.

In terms of biological role, produces ATP from ADP in the presence of a proton gradient across the membrane. The sequence is that of V-type ATP synthase subunit E 2 from Clostridium tetani (strain Massachusetts / E88).